Here is a 98-residue protein sequence, read N- to C-terminus: 10 kDa chaperonin (98 aa).

The protein belongs to the GroES chaperonin family. As to quaternary structure, forms stable complexes with CPN60 in the presence of ATP.

Its subcellular location is the cytoplasm. Its function is as follows. Seems to function only as a co-chaperone, along with cpn60, and in certain cases is essential for the discharge of biologically active proteins from cpn60. This Brassica napus (Rape) protein is 10 kDa chaperonin.